The chain runs to 209 residues: MSSSLPLRDDGALRGSLMLAVFTLFGLGLAYSLVATGITGALFSEQATGSLVRVDARVVGSALVAQPFTDARYFQPRPSAAKYDLTAASGSNQARSNPDLLARIAATRAQVAKRDGIAPEAVPGELLTQSGSGLDPHLSPAGAQVQIRRVAAARGLPEQRVAALVQAATEAPQFGLLGQPRVNVLALNLALDKAGNGESGRDNGVKQAY.

The chain crosses the membrane as a helical span at residues 18 to 38 (MLAVFTLFGLGLAYSLVATGI).

This sequence belongs to the KdpC family. In terms of assembly, the system is composed of three essential subunits: KdpA, KdpB and KdpC.

The protein localises to the cell inner membrane. Functionally, part of the high-affinity ATP-driven potassium transport (or Kdp) system, which catalyzes the hydrolysis of ATP coupled with the electrogenic transport of potassium into the cytoplasm. This subunit acts as a catalytic chaperone that increases the ATP-binding affinity of the ATP-hydrolyzing subunit KdpB by the formation of a transient KdpB/KdpC/ATP ternary complex. This is Potassium-transporting ATPase KdpC subunit from Xanthomonas oryzae pv. oryzae (strain MAFF 311018).